Here is a 230-residue protein sequence, read N- to C-terminus: MILTKNSNEKKPLKKGLFIVFEGIDGAGKTSILKQLLEVLKEPKLVNKIFLTREPGGKNNNAAEMIREFFLKNLEVFDPLTLAYLYASSRAEHVKKTINPHLEKDHIVISDRFVHSSYIYQGIVQNQSLDVIYQINQQAIGELEIDYVFYFDVNVNNALNRMKNRFDNTNAFDSQNKQFYEKLLKQYPSVFKVYNQPKKIIFIDANKNENEVLCEVKEQLLKIFKEHKYI.

23 to 30 (GIDGAGKT) serves as a coordination point for ATP.

This sequence belongs to the thymidylate kinase family.

It carries out the reaction dTMP + ATP = dTDP + ADP. Functionally, phosphorylation of dTMP to form dTDP in both de novo and salvage pathways of dTTP synthesis. This is Thymidylate kinase from Ureaplasma parvum serovar 3 (strain ATCC 27815 / 27 / NCTC 11736).